The following is an 89-amino-acid chain: Small ribosomal subunit protein uS15 (89 aa).

The protein belongs to the universal ribosomal protein uS15 family. Part of the 30S ribosomal subunit. Forms a bridge to the 50S subunit in the 70S ribosome, contacting the 23S rRNA.

In terms of biological role, one of the primary rRNA binding proteins, it binds directly to 16S rRNA where it helps nucleate assembly of the platform of the 30S subunit by binding and bridging several RNA helices of the 16S rRNA. Functionally, forms an intersubunit bridge (bridge B4) with the 23S rRNA of the 50S subunit in the ribosome. In Roseiflexus sp. (strain RS-1), this protein is Small ribosomal subunit protein uS15.